Here is a 465-residue protein sequence, read N- to C-terminus: GTPase Der (465 aa).

2 EngA-type G domains span residues 3 to 167 (PLVA…PEEG) and 179 to 352 (VRIA…ASAT). GTP-binding positions include 9-16 (GRPNVGKS), 57-61 (DTGGI), 119-122 (NKID), 185-192 (GRPNVGKS), 232-236 (DTAGL), and 297-300 (NKWD). Residues 353–437 (HEFSTSEVNQ…PVCFIFREGA (85 aa)) enclose the KH-like domain.

This sequence belongs to the TRAFAC class TrmE-Era-EngA-EngB-Septin-like GTPase superfamily. EngA (Der) GTPase family. Associates with the 50S ribosomal subunit.

Functionally, GTPase that plays an essential role in the late steps of ribosome biogenesis. The protein is GTPase Der of Xanthomonas oryzae pv. oryzae (strain MAFF 311018).